A 452-amino-acid polypeptide reads, in one-letter code: Glycine receptor subunit alpha-2 (452 aa).

The N-terminal stretch at 1–27 (MNRQLVNILTALFAFFLETNHFRTAFC) is a signal peptide. At 28-256 (KDHDSRSGKQ…KFHLERQMGY (229 aa)) the chain is on the extracellular side. Asn-72 is a glycosylation site (N-linked (GlcNAc...) asparagine). Arg-99 contributes to the glycine binding site. Arg-99 serves as a coordination point for strychnine. N-linked (GlcNAc...) asparagine glycosylation occurs at Asn-103. Residue Ser-163 participates in glycine binding. An intrachain disulfide couples Cys-172 to Cys-186. Zn(2+) is bound by residues Glu-226 and Glu-228. Cysteines 232 and 243 form a disulfide. Thr-238 provides a ligand contact to glycine. His-249 is a Zn(2+) binding site. Residues 257 to 278 (YLIQMYIPSLLIVILSWVSFWI) traverse the membrane as a helical segment. At 279–283 (NMDAA) the chain is on the cytoplasmic side. Residues 284–304 (PARVALGITTVLTMTTQSSGS) traverse the membrane as a helical segment. The Extracellular segment spans residues 305-315 (RASLPKVSYVK). A helical membrane pass occupies residues 316–336 (AIDIWMAVCLLFVFAALLEYA). The Cytoplasmic portion of the chain corresponds to 337 to 420 (AVNFVSRQHK…FVDRAKRIDT (84 aa)). The helical transmembrane segment at 421-441 (ISRAAFPLAFLIFNIFYWITY) threads the bilayer. Residues 442 to 452 (KIIRHEDVHKK) are Extracellular-facing.

This sequence belongs to the ligand-gated ion channel (TC 1.A.9) family. Glycine receptor (TC 1.A.9.3) subfamily. GLRA2 sub-subfamily. In terms of assembly, interacts with GLRB. Heteropentamer composed of GLRA2 and GLRB. Functional GLRB-GLRA2 heteropentamers contain four GLRA2 subunits and one GLRB subunit, although alternative subunit composition cannot be excluded. Homopentamer (in vitro). Both homopentamers and heteropentamers form functional ion channels, but their characteristics are subtly different.

The protein localises to the postsynaptic cell membrane. The protein resides in the synapse. Its subcellular location is the cell membrane. It is found in the cell projection. It carries out the reaction chloride(in) = chloride(out). Its activity is regulated as follows. Channel opening is triggered by extracellular glycine. Channel opening is also triggered by taurine and beta-alanine. Inhibited by strychnine. Inhibited by picrotoxin. Channel activity is potentiated by 10-100 uM Zn(2+). Channel activity is marginally increased by 50 mM ethanol; it is strongly increased by a combination of 0.5 uM Zn(2+) and 50 mM ethanol. Channel activity is inhibited by 100-1000 uM Zn(2+). In terms of biological role, subunit of heteromeric glycine-gated chloride channels. Plays a role in synaptic plasticity. Contributes to the generation of inhibitory postsynaptic currents, and is involved in the down-regulation of neuronal excitability. Plays a role in cellular responses to ethanol. In Homo sapiens (Human), this protein is Glycine receptor subunit alpha-2.